Consider the following 436-residue polypeptide: Protein arginine methyltransferase NDUFAF7, mitochondrial (436 aa).

Residues 1-41 constitute a mitochondrion transit peptide; sequence MNALVRRCVARAGLPCIWRGKCYSSGNEPAESNQVTPMLRH. A disordered region spans residues 411–436; that stretch reads GSQERNACQSKTPSSSVAGFDELVWQ. The span at 413 to 427 shows a compositional bias: polar residues; it reads QERNACQSKTPSSSV.

This sequence belongs to the NDUFAF7 family. Interacts with NDUFS2.

The protein localises to the mitochondrion. The enzyme catalyses L-arginyl-[protein] + 2 S-adenosyl-L-methionine = N(omega),N(omega)'-dimethyl-L-arginyl-[protein] + 2 S-adenosyl-L-homocysteine + 2 H(+). Arginine methyltransferase involved in the assembly or stability of mitochondrial NADH:ubiquinone oxidoreductase complex (complex I). Acts by mediating symmetric dimethylation of 'Arg-118' of NDUFS2 after it assembles into the complex I, stabilizing the early intermediate complex. In Mus musculus (Mouse), this protein is Protein arginine methyltransferase NDUFAF7, mitochondrial.